The following is a 92-amino-acid chain: Small ribosomal subunit protein uS19 (92 aa).

Belongs to the universal ribosomal protein uS19 family.

In terms of biological role, protein S19 forms a complex with S13 that binds strongly to the 16S ribosomal RNA. The sequence is that of Small ribosomal subunit protein uS19 from Desulfosudis oleivorans (strain DSM 6200 / JCM 39069 / Hxd3) (Desulfococcus oleovorans).